A 277-amino-acid chain; its full sequence is Probable redox regulatory protein ML2435 (277 aa).

Belongs to the Rv0495c family.

Essential for maintaining intracellular redox homeostasis. This Mycobacterium leprae (strain TN) protein is Probable redox regulatory protein ML2435.